The sequence spans 349 residues: Probable G-protein coupled receptor 21 (349 aa).

Over 1–32 (MNSTLDGNQSSHPFCLLAFGYLETVNFCLLEV) the chain is Extracellular. N-linked (GlcNAc...) asparagine glycans are attached at residues asparagine 2 and asparagine 8. Residues 33 to 53 (LIIVFLTVLIISGNIIVIFVF) form a helical membrane-spanning segment. Residues 54 to 75 (HCAPLLNHHTTSYFIQTMAYAD) are Cytoplasmic-facing. A helical transmembrane segment spans residues 76–96 (LFVGVSCVVPSLSLLHHPLPV). The Extracellular portion of the chain corresponds to 97-104 (EESLTCQI). The helical transmembrane segment at 105-125 (FGFVVSVLKSVSMASLACISI) threads the bilayer. At 126-147 (DRYIAITKPLTYNTLVTPWRLR) the chain is on the cytoplasmic side. A helical membrane pass occupies residues 148–168 (LCIFLIWLYSTLVFLPSFFHW). At 169–191 (GKPGYHGDVFQWCAESWHTDSYF) the chain is on the extracellular side. A helical transmembrane segment spans residues 192–212 (TLFIVMMLYAPAALIVCFTYF). Residues 213–252 (NIFRICQQHTKDISERQARFSSQSGETGEVQACPDKRYAM) are Cytoplasmic-facing. The chain crosses the membrane as a helical span at residues 253–273 (VLFRITSVFYILWLPYIIYFL). At 274-283 (LESSTGHSNR) the chain is on the extracellular side. A helical transmembrane segment spans residues 284-304 (FASFLTTWLAISNSFCNCVIY). Residues 305–349 (SLSNSVFQRGLKRLSGAMCTSCASQTTANDPYTVRSKGPLNGCHI) are Cytoplasmic-facing.

Belongs to the G-protein coupled receptor 1 family. In terms of tissue distribution, not detected in the brain regions thalamus, putamen, caudate, frontal cortex, pons, hypothalamus, hippocampus.

Its subcellular location is the cell membrane. Functionally, orphan receptor. The sequence is that of Probable G-protein coupled receptor 21 (GPR21) from Homo sapiens (Human).